A 249-amino-acid chain; its full sequence is Elongator complex protein 6 homolog (249 aa).

Belongs to the ELP6 family. Component of the elongator complex.

The protein localises to the cytoplasm. It is found in the nucleus. It participates in tRNA modification; 5-methoxycarbonylmethyl-2-thiouridine-tRNA biosynthesis. In terms of biological role, component of the elongator complex which is required for multiple tRNA modifications, including mcm5U (5-methoxycarbonylmethyl uridine), mcm5s2U (5-methoxycarbonylmethyl-2-thiouridine), and ncm5U (5-carbamoylmethyl uridine). The elongator complex catalyzes formation of carboxymethyluridine in the wobble base at position 34 in tRNAs. The protein is Elongator complex protein 6 homolog of Schizosaccharomyces pombe (strain 972 / ATCC 24843) (Fission yeast).